A 335-amino-acid chain; its full sequence is Nuclear transcription factor Y subunit gamma (335 aa).

It belongs to the NFYC/HAP5 subunit family. As to quaternary structure, heterotrimeric transcription factor composed of three components, NF-YA, NF-YB and NF-YC. NF-YB and NF-YC must interact and dimerize for NF-YA association and DNA binding.

It localises to the nucleus. Functionally, component of the sequence-specific heterotrimeric transcription factor (NF-Y) which specifically recognizes a 5'-CCAAT-3' box motif found in the promoters of its target genes. NF-Y can function as both an activator and a repressor, depending on its interacting cofactors. The polypeptide is Nuclear transcription factor Y subunit gamma (Nfyc) (Rattus norvegicus (Rat)).